The following is a 99-amino-acid chain: Large ribosomal subunit protein uL23 (99 aa).

Belongs to the universal ribosomal protein uL23 family. Part of the 50S ribosomal subunit. Contacts protein L29, and trigger factor when it is bound to the ribosome.

Its function is as follows. One of the early assembly proteins it binds 23S rRNA. One of the proteins that surrounds the polypeptide exit tunnel on the outside of the ribosome. Forms the main docking site for trigger factor binding to the ribosome. The protein is Large ribosomal subunit protein uL23 of Azotobacter vinelandii (strain DJ / ATCC BAA-1303).